Here is a 720-residue protein sequence, read N- to C-terminus: Heat shock protein homolog pss1 (720 aa).

Serine 38 bears the Phosphoserine mark. At threonine 39 the chain carries Phosphothreonine. A compositionally biased stretch (basic and acidic residues) spans 658–690 (KRQKVQAEREAAKAATKSEAEKQKPSGKFEEGT). The segment at 658 to 720 (KRQKVQAERE…ETMEIDEQKE (63 aa)) is disordered. Over residues 703–720 (VAPENEEVETMEIDEQKE) the composition is skewed to acidic residues.

It belongs to the heat shock protein 70 family.

It localises to the cytoplasm. Required for normal growth at various temperatures. The sequence is that of Heat shock protein homolog pss1 (pss1) from Schizosaccharomyces pombe (strain 972 / ATCC 24843) (Fission yeast).